We begin with the raw amino-acid sequence, 266 residues long: 3-methyl-2-oxobutanoate hydroxymethyltransferase (266 aa).

Residues Asp-45 and Asp-84 each contribute to the Mg(2+) site. Residues 45-46, Asp-84, and Lys-112 contribute to the 3-methyl-2-oxobutanoate site; that span reads DS. A Mg(2+)-binding site is contributed by Glu-114. The active-site Proton acceptor is Glu-181.

Belongs to the PanB family. As to quaternary structure, homodecamer; pentamer of dimers. The cofactor is Mg(2+).

The protein localises to the cytoplasm. The enzyme catalyses 3-methyl-2-oxobutanoate + (6R)-5,10-methylene-5,6,7,8-tetrahydrofolate + H2O = 2-dehydropantoate + (6S)-5,6,7,8-tetrahydrofolate. The protein operates within cofactor biosynthesis; (R)-pantothenate biosynthesis; (R)-pantoate from 3-methyl-2-oxobutanoate: step 1/2. Its function is as follows. Catalyzes the reversible reaction in which hydroxymethyl group from 5,10-methylenetetrahydrofolate is transferred onto alpha-ketoisovalerate to form ketopantoate. The polypeptide is 3-methyl-2-oxobutanoate hydroxymethyltransferase (Pseudomonas syringae pv. tomato (strain ATCC BAA-871 / DC3000)).